The primary structure comprises 288 residues: Fructose-bisphosphate aldolase (288 aa).

S49 lines the D-glyceraldehyde 3-phosphate pocket. The Proton donor role is filled by D84. Zn(2+) is bound by residues H85, D105, E135, and H177. A dihydroxyacetone phosphate-binding site is contributed by G178. H206 provides a ligand contact to Zn(2+). Residues 207–209 and 228–231 each bind dihydroxyacetone phosphate; these read GGS and NINT.

This sequence belongs to the class II fructose-bisphosphate aldolase family. Homodimer. Zn(2+) serves as cofactor.

It carries out the reaction beta-D-fructose 1,6-bisphosphate = D-glyceraldehyde 3-phosphate + dihydroxyacetone phosphate. Its pathway is carbohydrate degradation; glycolysis; D-glyceraldehyde 3-phosphate and glycerone phosphate from D-glucose: step 4/4. In terms of biological role, catalyzes the aldol condensation of dihydroxyacetone phosphate (DHAP or glycerone-phosphate) with glyceraldehyde 3-phosphate (G3P) to form fructose 1,6-bisphosphate (FBP) in gluconeogenesis and the reverse reaction in glycolysis. This chain is Fructose-bisphosphate aldolase (fba), found in Mycoplasma pneumoniae (strain ATCC 29342 / M129 / Subtype 1) (Mycoplasmoides pneumoniae).